A 74-amino-acid polypeptide reads, in one-letter code: ATP synthase subunit 9, mitochondrial (74 aa).

Transmembrane regions (helical) follow at residues 12-32 (LATIGLAGAGVGVGLVFAALI) and 50-70 (ILGFALTEAIGLFALMMAFLL).

Belongs to the ATPase C chain family. As to quaternary structure, F-type ATPases have 2 components, CF(1) - the catalytic core - and CF(0) - the membrane proton channel. CF(1) has five subunits: alpha(3), beta(3), gamma(1), delta(1), epsilon(1). CF(0) has three main subunits: a, b and c.

The protein resides in the mitochondrion membrane. Mitochondrial membrane ATP synthase (F(1)F(0) ATP synthase or Complex V) produces ATP from ADP in the presence of a proton gradient across the membrane which is generated by electron transport complexes of the respiratory chain. F-type ATPases consist of two structural domains, F(1) - containing the extramembraneous catalytic core and F(0) - containing the membrane proton channel, linked together by a central stalk and a peripheral stalk. During catalysis, ATP synthesis in the catalytic domain of F(1) is coupled via a rotary mechanism of the central stalk subunits to proton translocation. Part of the complex F(0) domain. A homomeric c-ring of probably 10 subunits is part of the complex rotary element. This Rhizopus oryzae (Mucormycosis agent) protein is ATP synthase subunit 9, mitochondrial.